The following is a 970-amino-acid chain: Protein translocase subunit SecA (970 aa).

ATP contacts are provided by residues glutamine 99, glycine 117–threonine 121, and aspartate 631.

The protein belongs to the SecA family. As to quaternary structure, monomer and homodimer. Part of the essential Sec protein translocation apparatus which comprises SecA, SecYEG and auxiliary proteins SecDF. Other proteins may also be involved.

The protein resides in the cell inner membrane. It is found in the cytoplasm. The enzyme catalyses ATP + H2O + cellular proteinSide 1 = ADP + phosphate + cellular proteinSide 2.. Part of the Sec protein translocase complex. Interacts with the SecYEG preprotein conducting channel. Has a central role in coupling the hydrolysis of ATP to the transfer of proteins into and across the cell membrane, serving as an ATP-driven molecular motor driving the stepwise translocation of polypeptide chains across the membrane. This chain is Protein translocase subunit SecA, found in Chlamydia caviae (strain ATCC VR-813 / DSM 19441 / 03DC25 / GPIC) (Chlamydophila caviae).